The chain runs to 182 residues: Photosystem I assembly protein Ycf4 (182 aa).

Transmembrane regions (helical) follow at residues 22–42 (WSSV…SSYL) and 63–83 (VMCF…LTIF).

Belongs to the Ycf4 family.

It localises to the plastid. Its subcellular location is the chloroplast thylakoid membrane. Its function is as follows. Seems to be required for the assembly of the photosystem I complex. This is Photosystem I assembly protein Ycf4 from Oltmannsiellopsis viridis (Marine flagellate).